The sequence spans 1220 residues: DNA-directed RNA polymerase subunit beta' (1220 aa).

Zn(2+) is bound by residues Cys60, Cys62, Cys75, and Cys78. Residues Asp449, Asp451, and Asp453 each coordinate Mg(2+). Zn(2+) is bound by residues Cys818, Cys892, Cys899, and Cys902.

Belongs to the RNA polymerase beta' chain family. As to quaternary structure, the RNAP catalytic core consists of 2 alpha, 1 beta, 1 beta' and 1 omega subunit. When a sigma factor is associated with the core the holoenzyme is formed, which can initiate transcription. It depends on Mg(2+) as a cofactor. Zn(2+) serves as cofactor.

It carries out the reaction RNA(n) + a ribonucleoside 5'-triphosphate = RNA(n+1) + diphosphate. Its function is as follows. DNA-dependent RNA polymerase catalyzes the transcription of DNA into RNA using the four ribonucleoside triphosphates as substrates. This chain is DNA-directed RNA polymerase subunit beta', found in Lacticaseibacillus paracasei (strain ATCC 334 / BCRC 17002 / CCUG 31169 / CIP 107868 / KCTC 3260 / NRRL B-441) (Lactobacillus paracasei).